A 69-amino-acid polypeptide reads, in one-letter code: DNA gyrase inhibitor YacG (69 aa).

4 residues coordinate Zn(2+): C9, C12, C28, and C32. The interval 48 to 69 (PVSPDAEDELFSGDLEAPHRGH) is disordered.

It belongs to the DNA gyrase inhibitor YacG family. As to quaternary structure, interacts with GyrB. Zn(2+) serves as cofactor.

Its function is as follows. Inhibits all the catalytic activities of DNA gyrase by preventing its interaction with DNA. Acts by binding directly to the C-terminal domain of GyrB, which probably disrupts DNA binding by the gyrase. The chain is DNA gyrase inhibitor YacG from Pseudomonas syringae pv. syringae (strain B728a).